A 307-amino-acid chain; its full sequence is Aspartate carbamoyltransferase catalytic subunit (307 aa).

2 residues coordinate carbamoyl phosphate: R58 and T59. K86 lines the L-aspartate pocket. 3 residues coordinate carbamoyl phosphate: R108, H138, and Q141. R171 and R223 together coordinate L-aspartate. Positions 264 and 265 each coordinate carbamoyl phosphate.

Belongs to the aspartate/ornithine carbamoyltransferase superfamily. ATCase family. Heterododecamer (2C3:3R2) of six catalytic PyrB chains organized as two trimers (C3), and six regulatory PyrI chains organized as three dimers (R2).

It catalyses the reaction carbamoyl phosphate + L-aspartate = N-carbamoyl-L-aspartate + phosphate + H(+). Its pathway is pyrimidine metabolism; UMP biosynthesis via de novo pathway; (S)-dihydroorotate from bicarbonate: step 2/3. Its function is as follows. Catalyzes the condensation of carbamoyl phosphate and aspartate to form carbamoyl aspartate and inorganic phosphate, the committed step in the de novo pyrimidine nucleotide biosynthesis pathway. In Streptococcus suis (strain 98HAH33), this protein is Aspartate carbamoyltransferase catalytic subunit.